The primary structure comprises 757 residues: Catalase-peroxidase (757 aa).

The segment at 1–28 is disordered; it reads MENQSNDISKCPFHNGSMDNQAASGTKN. The segment covering 17–28 has biased composition (polar residues); that stretch reads SMDNQAASGTKN. Residues 100–247 constitute a cross-link (tryptophyl-tyrosyl-methioninium (Trp-Tyr) (with M-273)); the sequence is WHSAGTYRVH…LAAVQMGLIY (148 aa). Histidine 101 functions as the Proton acceptor in the catalytic mechanism. The tryptophyl-tyrosyl-methioninium (Tyr-Met) (with W-100) cross-link spans 247–273; that stretch reads YVNPEGPDGNPDPILAAKDIRDTFGRM. Histidine 288 provides a ligand contact to heme b.

It belongs to the peroxidase family. Peroxidase/catalase subfamily. Homodimer or homotetramer. Requires heme b as cofactor. Formation of the three residue Trp-Tyr-Met cross-link is important for the catalase, but not the peroxidase activity of the enzyme.

It catalyses the reaction H2O2 + AH2 = A + 2 H2O. It carries out the reaction 2 H2O2 = O2 + 2 H2O. Bifunctional enzyme with both catalase and broad-spectrum peroxidase activity. This chain is Catalase-peroxidase, found in Flavobacterium johnsoniae (strain ATCC 17061 / DSM 2064 / JCM 8514 / BCRC 14874 / CCUG 350202 / NBRC 14942 / NCIMB 11054 / UW101) (Cytophaga johnsonae).